Here is a 713-residue protein sequence, read N- to C-terminus: Polyribonucleotide nucleotidyltransferase (713 aa).

Positions 495 and 501 each coordinate Mg(2+). The KH domain maps to 562-621 (PRLLTLKIPVDMIGLVIGPGGKTIKRIVEETGAKVDIEDDGTVVVSSIDGAKALAAKQII). In terms of domain architecture, S1 motif spans 631–700 (DKVYLGTVTR…QKGRINLTRR (70 aa)).

The protein belongs to the polyribonucleotide nucleotidyltransferase family. Requires Mg(2+) as cofactor.

The protein localises to the cytoplasm. The enzyme catalyses RNA(n+1) + phosphate = RNA(n) + a ribonucleoside 5'-diphosphate. Its function is as follows. Involved in mRNA degradation. Catalyzes the phosphorolysis of single-stranded polyribonucleotides processively in the 3'- to 5'-direction. This chain is Polyribonucleotide nucleotidyltransferase, found in Gloeobacter violaceus (strain ATCC 29082 / PCC 7421).